A 228-amino-acid chain; its full sequence is MAAELESSLELSFTGSGTVPGGGLPPARSRIFKIIVIGDSNVGKTCLTYRFCAGRFPQRTEATIGVDFRERAVTIDGERIKIQLWDTAGQERFRKSMVQHYYRNVHAVVFVYDMTNLASFHSLPSWIEECKQHLLTNDIPRILVGNKCDLRNAIQVPTDLAQKFADTHSMPLFETSAKNPNDNDHVEAIFMTLAHKLKSHKPLMLSQPPDRDQIHIKPEPKPAMTCWC.

GTP is bound by residues asparagine 41, valine 42, glycine 43, lysine 44, threonine 45, cysteine 46, threonine 60, and threonine 63. Threonine 45 lines the Mg(2+) pocket. A Switch 1 motif is present at residues 54 to 66 (GRFPQRTEATIGV). Mg(2+) is bound by residues threonine 63 and aspartate 86. The Switch 2 signature appears at 87 to 106 (TAGQERFRKSMVQHYYRNVH). The GTP site is built by glycine 89, asparagine 146, lysine 147, aspartate 149, alanine 177, and lysine 178. S-geranylgeranyl cysteine attachment occurs at residues cysteine 226 and cysteine 228. Residue cysteine 228 is modified to Cysteine methyl ester.

This sequence belongs to the small GTPase superfamily. Rab family. Interacts (GTP- and GDP-bound forms) with ATG16L1; the complex consists of a tetramer where two RAB33B molecules bind independently one molecule of the ATG16L1 homodimer; the interaction promotes ATG12-ATG5-ATG16L1 complex recruitment to phagophores. Interacts with ATG16L2; however interaction is approximately hundred times lower than for ATG16L1. Interacts with RIC1 (via C-terminus domain); the interaction is direct with a preference for RAB33B-GTP. Interacts with RGP1. Requires Mg(2+) as cofactor.

It is found in the golgi apparatus membrane. Its subcellular location is the golgi apparatus. It localises to the cis-Golgi network. The protein resides in the preautophagosomal structure membrane. The catalysed reaction is GTP + H2O = GDP + phosphate + H(+). With respect to regulation, regulated by guanine nucleotide exchange factors (GEFs) which promote the exchange of bound GDP for free GTP. Regulated by GTPase activating proteins (GAPs) such as SGSM2 which increase the GTP hydrolysis activity. Inhibited by GDP dissociation inhibitors (GDIs). Its function is as follows. The small GTPases Rab are key regulators of intracellular membrane trafficking, from the formation of transport vesicles to their fusion with membranes. Rabs cycle between an inactive GDP-bound form and an active GTP-bound form that is able to recruit to membranes different sets of downstream effectors directly responsible for vesicle formation, movement, tethering and fusion. RAB33B acts, in coordination with RAB6A, to regulate intra-Golgi retrograde trafficking. Participates in autophagosome formation by recruiting the ATG12-ATG5-ATG16L1 complex to phagophores, probably in a nucleotide-independent manner. The polypeptide is Ras-related protein Rab-33B (RAB33B) (Gallus gallus (Chicken)).